Consider the following 632-residue polypeptide: MAEETQHNKLAAAKKKLKEYWQKNSPRVPAGANRNRKTNGSIPEKATSGGCQPPRDSATGFHREGPTSSATLKDLESPCQERAVVLDSRSVEISQLKNTIKSLKQQKKQVEHQLEEEKKANNKKQKAKRVLEVQIQTLNIQKEELNTDLYHMKRSLRYFEEKSKDLAVRLQHSLQRKGELESVLSNVMATQKKKANQLSSRSKARTEWKLEQSMREEALLKVQLTQFKESFQQVQLERDEYSEHLKGERARWQQRMRKMSQEICTLKKEKQQDMRRVEKLERSLSKLKNQMAEPLPPEPPAVPSEVELQHLRKELERVAGELQAQVKNNQRISLLNQRQEERIREQEERLRKQEERIQEQHKSLQQLAKPQSVFKEPNNENKNALQLEQQVKELQEKLGEEHLEAASQQNQQLTAQLSLMALPGEGHGGEHLDSEGEEAPRPMPSVPEDPESREAMSSFMDHLEEKADLSELVKKKELCFIHHWRERCHQKTHHLLSEPGGRAKDAALGGGHHQAGAQGGDEGEAAGAAADGIAAYSNYNNGHRKFLAAAHNSADEPGPGAPAPQELGAADKHGHLCEVSLTSSAQGEAREDPLLDKPTAQPIVQDHQEHPGLGSNCCVPFLCWAWLPRRRR.

Residues 1 to 76 (MAEETQHNKL…TSSATLKDLE (76 aa)) are disordered. Coiled coils occupy residues 86–154 (LDSR…HMKR) and 220–421 (LKVQ…SLMA). Basic and acidic residues-rich tracts occupy residues 352 to 362 (KQEERIQEQHK) and 427 to 440 (HGGE…EEAP). Disordered regions lie at residues 352–377 (KQEE…FKEP), 423–452 (PGEG…DPES), and 496–524 (LSEP…DEGE). A compositionally biased stretch (gly residues) spans 508 to 520 (LGGGHHQAGAQGG).

It belongs to the GOLGA8 family.

This is Golgin subfamily A member 8J (GOLGA8J) from Homo sapiens (Human).